Here is a 661-residue protein sequence, read N- to C-terminus: 3-hydroxypropionyl-coenzyme A synthetase (661 aa).

The active site involves aspartate 526. Lysine 617 carries the N6-acetyllysine modification.

The protein belongs to the ATP-dependent AMP-binding enzyme family. In terms of assembly, homotetramer.

It carries out the reaction 3-hydroxypropanoate + ATP + CoA = 3-hydroxypropanoyl-CoA + AMP + diphosphate. Functionally, plays a role in the autotrophic CO(2) fixation pathway. Activates 3-hydroxypropionate to its CoA ester. Can also activate propionate, and to a lesser extent acrylate, acetate and butyrate. This Metallosphaera sedula (strain ATCC 51363 / DSM 5348 / JCM 9185 / NBRC 15509 / TH2) protein is 3-hydroxypropionyl-coenzyme A synthetase.